The chain runs to 941 residues: Zinc finger protein su(Hw) (941 aa).

Disordered regions lie at residues 1-97 (MSAS…APAA) and 176-211 (ENNNGQEIVVTEDDEDLGEDGDEDGEDSSGKGNSSQ). Residues 47–57 (STTTTTSRTPS) are compositionally biased toward low complexity. A compositionally biased stretch (acidic residues) spans 185-202 (VTEDDEDLGEDGDEDGED). Threonine 186 carries the post-translational modification Phosphothreonine. The C2H2-type 1; atypical zinc finger occupies 220-242 (HVCGKCYKTFRRVQSLKKHLEFC). The C2H2-type 2 zinc finger occupies 290-313 (INCPDCPKSFKTQTSYERHIFITH). Residues 319–341 (FPCSICNANLRSEALLALHEEQH) form a C2H2-type 3; atypical zinc finger. 9 consecutive C2H2-type zinc fingers follow at residues 348–366 (YACKICGKDFTRSYHLKRH), 380–402 (MSCKVCDRVFYRLDNLRSHLKQH), 413–435 (YMCHTCKNCFYSLSTLNIHIRTH), 441–463 (FDCDLCDKKFSALVALKKHRRYH), 469–491 (YSCTVCNQAFAVKEVLNRHMKRH), 497–519 (HKCDECGKSFIQATQLRTHSKTH), 523–545 (FPCEQCDEKFKTEKQLERHVKTH), 553–577 (FSCAECKRNFRTPALLKEHMDEGKH), and 596–619 (TDCAICDKNFDSSDTLRRHIRTVH). Residues 760-860 (ILTEEDIKLK…PIDDVIEYVL (101 aa)) form an interaction with mod(mdg4) region. The interval 864–941 (DQDEGGLDKD…KKPVGEQEKA (78 aa)) is disordered. 2 stretches are compositionally biased toward basic and acidic residues: residues 869-880 (GLDKDNESHSGD) and 891-941 (KTNE…QEKA).

As to quaternary structure, component of the gypsy chromatin insulator complex, composed of Cp190, mod(mdg4) and su(Hw). The gypsy chromatin insulator complex interacts with Topors via mod(mdg4) and su(Hw). Upon ecdysone stimulation, interacts with Nup98.

It is found in the nucleus. The protein localises to the chromosome. In terms of biological role, component of the gypsy chromatin insulator complex which is required for the function of the gypsy chromatin insulator and other endogenous chromatin insulators. Chromatin insulators are regulatory elements which establish independent domains of transcriptional activity within eukaryotic genomes. Insulators have two defining properties; they can block the communication between an enhancer and a promoter when placed between them and can also buffer transgenes from position effect variegation (PEV). Insulators are proposed to structure the chromatin fiber into independent domains of differing transcriptional potential by promoting the formation of distinct chromatin loops. This chromatin looping may involve the formation of insulator bodies, where homotypic interactions between individual subunits of the insulator complex could promote the clustering of widely spaced insulators at the nuclear periphery. Within the gypsy insulator complex, this protein binds specifically to a region of the gypsy element located 3' of the 5' long terminal repeat (LTR), and may also mediate interaction with other endogenous insulators at sites distinct from those recognized by Cp190. Cooperates with pita and cliff to recruit Cp190 and regulate insulator function at the front-ultraabdominal (Fub) boundary. The polypeptide is Zinc finger protein su(Hw) (Drosophila melanogaster (Fruit fly)).